The following is a 332-amino-acid chain: Methionyl-tRNA formyltransferase (332 aa).

Residue 124-127 coordinates (6S)-5,6,7,8-tetrahydrofolate; that stretch reads SLLP.

It belongs to the Fmt family.

It carries out the reaction L-methionyl-tRNA(fMet) + (6R)-10-formyltetrahydrofolate = N-formyl-L-methionyl-tRNA(fMet) + (6S)-5,6,7,8-tetrahydrofolate + H(+). Functionally, attaches a formyl group to the free amino group of methionyl-tRNA(fMet). The formyl group appears to play a dual role in the initiator identity of N-formylmethionyl-tRNA by promoting its recognition by IF2 and preventing the misappropriation of this tRNA by the elongation apparatus. This Polynucleobacter asymbioticus (strain DSM 18221 / CIP 109841 / QLW-P1DMWA-1) (Polynucleobacter necessarius subsp. asymbioticus) protein is Methionyl-tRNA formyltransferase.